The chain runs to 418 residues: Adenylosuccinate synthetase 2 (418 aa).

Residues 12-18 (GDEGKGR) and 40-42 (GHT) each bind GTP. Asp-13 acts as the Proton acceptor in catalysis. Positions 13 and 40 each coordinate Mg(2+). IMP is bound by residues 13 to 16 (DEGK), 38 to 41 (NAGH), Thr-127, Lys-141, Thr-239, and Arg-301. His-41 functions as the Proton donor in the catalytic mechanism. Position 297-303 (297-303 (AVTGRPR)) interacts with substrate. GTP-binding positions include Arg-303, 329–331 (KID), and 407–409 (SVG).

The protein belongs to the adenylosuccinate synthetase family. In terms of assembly, homodimer. It depends on Mg(2+) as a cofactor.

Its subcellular location is the cytoplasm. The enzyme catalyses IMP + L-aspartate + GTP = N(6)-(1,2-dicarboxyethyl)-AMP + GDP + phosphate + 2 H(+). It functions in the pathway purine metabolism; AMP biosynthesis via de novo pathway; AMP from IMP: step 1/2. In terms of biological role, plays an important role in the de novo pathway of purine nucleotide biosynthesis. Catalyzes the first committed step in the biosynthesis of AMP from IMP. In Pseudoalteromonas translucida (strain TAC 125), this protein is Adenylosuccinate synthetase 2.